A 71-amino-acid polypeptide reads, in one-letter code: Small ribosomal subunit protein bS21 (71 aa).

Over residues 34 to 44 (RREHYEKPTSE) the composition is skewed to basic and acidic residues. The tract at residues 34–71 (RREHYEKPTSERKRKKAAAVKRHAKKLSRDNARRTRLY) is disordered. Residues 45–59 (RKRKKAAAVKRHAKK) show a composition bias toward basic residues. The segment covering 60-71 (LSRDNARRTRLY) has biased composition (basic and acidic residues).

This sequence belongs to the bacterial ribosomal protein bS21 family.

The protein is Small ribosomal subunit protein bS21 of Idiomarina loihiensis (strain ATCC BAA-735 / DSM 15497 / L2-TR).